We begin with the raw amino-acid sequence, 396 residues long: L-lactate dehydrogenase (396 aa).

One can recognise an FMN hydroxy acid dehydrogenase domain in the interval 1-380; it reads MIISAASDYR…TQDSLVQGLG (380 aa). Tyr24 contacts substrate. The FMN site is built by Ser106 and Gln127. Tyr129 contacts substrate. Thr155 is a binding site for FMN. Arg164 provides a ligand contact to substrate. Lys251 is a binding site for FMN. His275 functions as the Proton acceptor in the catalytic mechanism. Residue Arg278 participates in substrate binding. Residue 306-330 coordinates FMN; sequence DSGIRNGLDVVRMIALGADTVLLGR.

This sequence belongs to the FMN-dependent alpha-hydroxy acid dehydrogenase family. It depends on FMN as a cofactor.

Its subcellular location is the cell inner membrane. It carries out the reaction (S)-lactate + A = pyruvate + AH2. Its function is as follows. Catalyzes the conversion of L-lactate to pyruvate. Is coupled to the respiratory chain. In Shigella dysenteriae serotype 1 (strain Sd197), this protein is L-lactate dehydrogenase.